A 1492-amino-acid chain; its full sequence is DNA-directed RNA polymerase subunit beta' (1492 aa).

Residues Cys-67, Cys-69, Cys-82, and Cys-85 each coordinate Zn(2+). Mg(2+) is bound by residues Asp-499, Asp-501, and Asp-503. 4 residues coordinate Zn(2+): Cys-867, Cys-943, Cys-950, and Cys-953.

This sequence belongs to the RNA polymerase beta' chain family. The RNAP catalytic core consists of 2 alpha, 1 beta, 1 beta' and 1 omega subunit. When a sigma factor is associated with the core the holoenzyme is formed, which can initiate transcription. Requires Mg(2+) as cofactor. It depends on Zn(2+) as a cofactor.

The catalysed reaction is RNA(n) + a ribonucleoside 5'-triphosphate = RNA(n+1) + diphosphate. DNA-dependent RNA polymerase catalyzes the transcription of DNA into RNA using the four ribonucleoside triphosphates as substrates. The chain is DNA-directed RNA polymerase subunit beta' from Chlorobium phaeobacteroides (strain DSM 266 / SMG 266 / 2430).